We begin with the raw amino-acid sequence, 357 residues long: Cyclin-Y (357 aa).

Polar residues predominate over residues 1-13; that stretch reads MGNSSCCLRTRSS. The disordered stretch occupies residues 1–23; sequence MGNSSCCLRTRSSSGEDKSYNND. The region spanning 186–284 is the Cyclin N-terminal domain; sequence PDHRNIYRFV…RFLECLDFNI (99 aa).

It belongs to the cyclin family. In terms of assembly, interacts with pct-1; the interaction is required to activate pct-1.

It localises to the cytoplasm. Its subcellular location is the cell projection. The protein localises to the dendrite. The protein resides in the axon. In association with pct-1, regulates the trafficking of synaptic vesicle precursors in DA motor neurons by promoting anterograde trafficking to the axon and preventing dynein-dependent trafficking to the dendrite. May also regulate synaptic vesicle trafficking in DD motor neurons and in RIA interneurons. Involved in synapse formation during DD motor neuron remodeling by disassembling ventral presynaptic structures. May activate cdk-5. The sequence is that of Cyclin-Y from Caenorhabditis elegans.